Here is a 334-residue protein sequence, read N- to C-terminus: Nucleoid-associated protein YPTS_1390 (334 aa).

It belongs to the YejK family.

The protein resides in the cytoplasm. The protein localises to the nucleoid. The chain is Nucleoid-associated protein YPTS_1390 from Yersinia pseudotuberculosis serotype IB (strain PB1/+).